The primary structure comprises 304 residues: tRNA pseudouridine synthase B (304 aa).

Asp-38 acts as the Nucleophile in catalysis.

It belongs to the pseudouridine synthase TruB family. Type 1 subfamily.

It catalyses the reaction uridine(55) in tRNA = pseudouridine(55) in tRNA. Its function is as follows. Responsible for synthesis of pseudouridine from uracil-55 in the psi GC loop of transfer RNAs. The chain is tRNA pseudouridine synthase B from Listeria welshimeri serovar 6b (strain ATCC 35897 / DSM 20650 / CCUG 15529 / CIP 8149 / NCTC 11857 / SLCC 5334 / V8).